Consider the following 127-residue polypeptide: Mu-like prophage FluMu protein gp41 (127 aa).

Residues 107–127 (VSRGRLDTADQETGKDLSAVS) form a disordered region. A compositionally biased stretch (basic and acidic residues) spans 110–121 (GRLDTADQETGK).

The protein to phage Mu protein gp41.

In Haemophilus influenzae (strain ATCC 51907 / DSM 11121 / KW20 / Rd), this protein is Mu-like prophage FluMu protein gp41.